The primary structure comprises 376 residues: N-acetyldiaminopimelate deacetylase (376 aa).

Residue Asp-69 is part of the active site. Residue Glu-128 is the Proton acceptor of the active site.

Belongs to the peptidase M20A family. N-acetyldiaminopimelate deacetylase subfamily.

It carries out the reaction N-acetyl-(2S,6S)-2,6-diaminopimelate + H2O = (2S,6S)-2,6-diaminopimelate + acetate. It participates in amino-acid biosynthesis; L-lysine biosynthesis via DAP pathway; LL-2,6-diaminopimelate from (S)-tetrahydrodipicolinate (acetylase route): step 3/3. Functionally, catalyzes the conversion of N-acetyl-diaminopimelate to diaminopimelate and acetate. This is N-acetyldiaminopimelate deacetylase from Bacillus anthracis (strain A0248).